Here is a 257-residue protein sequence, read N- to C-terminus: Putative aldolase class 2 protein CC_1201 (257 aa).

Positions 114, 116, and 177 each coordinate Zn(2+).

The protein belongs to the aldolase class II family. Zn(2+) is required as a cofactor.

The chain is Putative aldolase class 2 protein CC_1201 from Caulobacter vibrioides (strain ATCC 19089 / CIP 103742 / CB 15) (Caulobacter crescentus).